Here is a 471-residue protein sequence, read N- to C-terminus: N-succinylglutamate 5-semialdehyde dehydrogenase (471 aa).

207–212 is a binding site for NAD(+); the sequence is GSAHAG. Residues E230 and C264 contribute to the active site.

This sequence belongs to the aldehyde dehydrogenase family. AstD subfamily.

The catalysed reaction is N-succinyl-L-glutamate 5-semialdehyde + NAD(+) + H2O = N-succinyl-L-glutamate + NADH + 2 H(+). It functions in the pathway amino-acid degradation; L-arginine degradation via AST pathway; L-glutamate and succinate from L-arginine: step 4/5. Its function is as follows. Catalyzes the NAD-dependent reduction of succinylglutamate semialdehyde into succinylglutamate. The chain is N-succinylglutamate 5-semialdehyde dehydrogenase from Novosphingobium aromaticivorans (strain ATCC 700278 / DSM 12444 / CCUG 56034 / CIP 105152 / NBRC 16084 / F199).